A 383-amino-acid polypeptide reads, in one-letter code: Dimethylsulfoniopropionate lyase 3 (383 aa).

The protein belongs to the aspartate/glutamate racemases family. ALMA1 subfamily. Homotetramer.

The catalysed reaction is S,S-dimethyl-beta-propiothetin = acrylate + dimethyl sulfide + H(+). In terms of biological role, mediates cleavage of dimethylsulfoniopropionate (DMSP) into dimethyl sulfide (DMS) and acrylate. DMS is the principal form by which sulfur is transported from oceans to the atmosphere and is a key component of the ocean sulfur cycle. This Emiliania huxleyi (strain CCMP1516) protein is Dimethylsulfoniopropionate lyase 3.